We begin with the raw amino-acid sequence, 692 residues long: Elongation factor G (692 aa).

The 275-residue stretch at 8–282 (EKTRNIGIMA…AVIDYLPSPL (275 aa)) folds into the tr-type G domain. GTP-binding positions include 17 to 24 (AHVDAGKT), 81 to 85 (DTPGH), and 135 to 138 (NKMD).

It belongs to the TRAFAC class translation factor GTPase superfamily. Classic translation factor GTPase family. EF-G/EF-2 subfamily.

The protein localises to the cytoplasm. Functionally, catalyzes the GTP-dependent ribosomal translocation step during translation elongation. During this step, the ribosome changes from the pre-translocational (PRE) to the post-translocational (POST) state as the newly formed A-site-bound peptidyl-tRNA and P-site-bound deacylated tRNA move to the P and E sites, respectively. Catalyzes the coordinated movement of the two tRNA molecules, the mRNA and conformational changes in the ribosome. The protein is Elongation factor G of Streptococcus agalactiae serotype Ia (strain ATCC 27591 / A909 / CDC SS700).